The sequence spans 608 residues: Phosphomethylpyrimidine synthase (608 aa).

Substrate contacts are provided by residues Asn-216, Met-245, Tyr-274, His-310, 330-332 (SRG), 371-374 (DGLR), and Glu-410. His-414 serves as a coordination point for Zn(2+). Position 437 (Tyr-437) interacts with substrate. His-478 serves as a coordination point for Zn(2+). The [4Fe-4S] cluster site is built by Cys-558, Cys-561, and Cys-566.

It belongs to the ThiC family. In terms of assembly, homodimer. Requires [4Fe-4S] cluster as cofactor.

It carries out the reaction 5-amino-1-(5-phospho-beta-D-ribosyl)imidazole + S-adenosyl-L-methionine = 4-amino-2-methyl-5-(phosphooxymethyl)pyrimidine + CO + 5'-deoxyadenosine + formate + L-methionine + 3 H(+). It functions in the pathway cofactor biosynthesis; thiamine diphosphate biosynthesis. Catalyzes the synthesis of the hydroxymethylpyrimidine phosphate (HMP-P) moiety of thiamine from aminoimidazole ribotide (AIR) in a radical S-adenosyl-L-methionine (SAM)-dependent reaction. The chain is Phosphomethylpyrimidine synthase from Ruegeria sp. (strain TM1040) (Silicibacter sp.).